A 196-amino-acid chain; its full sequence is ATP-dependent Clp protease proteolytic subunit (196 aa).

Catalysis depends on Ser97, which acts as the Nucleophile. The active site involves His122.

It belongs to the peptidase S14 family. As to quaternary structure, fourteen ClpP subunits assemble into 2 heptameric rings which stack back to back to give a disk-like structure with a central cavity, resembling the structure of eukaryotic proteasomes.

The protein localises to the cytoplasm. It carries out the reaction Hydrolysis of proteins to small peptides in the presence of ATP and magnesium. alpha-casein is the usual test substrate. In the absence of ATP, only oligopeptides shorter than five residues are hydrolyzed (such as succinyl-Leu-Tyr-|-NHMec, and Leu-Tyr-Leu-|-Tyr-Trp, in which cleavage of the -Tyr-|-Leu- and -Tyr-|-Trp bonds also occurs).. In terms of biological role, cleaves peptides in various proteins in a process that requires ATP hydrolysis. Has a chymotrypsin-like activity. Plays a major role in the degradation of misfolded proteins. This is ATP-dependent Clp protease proteolytic subunit from Lacticaseibacillus paracasei (strain ATCC 334 / BCRC 17002 / CCUG 31169 / CIP 107868 / KCTC 3260 / NRRL B-441) (Lactobacillus paracasei).